Consider the following 439-residue polypeptide: Acyl-lipid (8-3)-desaturase (439 aa).

Positions 7–88 constitute a Cytochrome b5 heme-binding domain; it reads GRSAAREMTA…LPKLDASKVE (82 aa). Heme-binding residues include His40 and His66. The helical transmembrane segment at 123 to 143 threads the bilayer; that stretch reads IPHMIYRVVEIVALFALSFWL. Positions 171-175 match the Histidine box-1 motif; it reads HEMGH. The short motif at 208–213 is the Histidine box-2 element; the sequence is HSKHHA. 3 consecutive transmembrane segments (helical) span residues 254–274, 287–307, and 312–332; these read AYLF…LYLH, FVWI…LGYS, and VGMY…QFAV. The Histidine box-3 signature appears at 376–380; it reads QIEHH.

Belongs to the fatty acid desaturase type 1 family. The cofactor is Fe(2+).

Its subcellular location is the membrane. It catalyses the reaction an (8Z,11Z,14Z)-icosatrienoyl-containing glycerolipid + 2 Fe(II)-[cytochrome b5] + O2 + 2 H(+) = (5Z,8Z,11Z,14Z)-eicosatetraenoyl-containing glycerolipid + 2 Fe(III)-[cytochrome b5] + 2 H2O. It carries out the reaction an (8Z,11Z,14Z,17Z)-eicosatetraenoyl-containing glycerolipid + 2 Fe(II)-[cytochrome b5] + O2 + 2 H(+) = a (5Z,8Z,11Z,14Z,17Z)-eicosapentaenoyl-containing glycerolipid + 2 Fe(III)-[cytochrome b5] + 2 H2O. Its function is as follows. Fatty acid desaturase that introduces a cis double bond at the 5-position in 20-carbon polyunsaturated fatty acids incorporated in a glycerolipid that contain a Delta(8) double bond. The protein is Acyl-lipid (8-3)-desaturase of Thraustochytrium sp.